The primary structure comprises 110 residues: NADH-quinone oxidoreductase subunit K (110 aa).

3 helical membrane passes run 13–33 (LNHY…GLFM), 41–61 (ILMS…AFSV), and 73–93 (IIIL…LLIY).

The protein belongs to the complex I subunit 4L family. NDH-1 is composed of 14 different subunits. Subunits NuoA, H, J, K, L, M, N constitute the membrane sector of the complex.

It is found in the cell inner membrane. The enzyme catalyses a quinone + NADH + 5 H(+)(in) = a quinol + NAD(+) + 4 H(+)(out). NDH-1 shuttles electrons from NADH, via FMN and iron-sulfur (Fe-S) centers, to quinones in the respiratory chain. The immediate electron acceptor for the enzyme in this species is believed to be ubiquinone. Couples the redox reaction to proton translocation (for every two electrons transferred, four hydrogen ions are translocated across the cytoplasmic membrane), and thus conserves the redox energy in a proton gradient. The sequence is that of NADH-quinone oxidoreductase subunit K from Rickettsia typhi (strain ATCC VR-144 / Wilmington).